Here is a 349-residue protein sequence, read N- to C-terminus: tRNA pseudouridine synthase D (349 aa).

Substrate is bound at residue F26. The active-site Nucleophile is D79. N128 is a binding site for substrate. The TRUD domain occupies 154 to 302 (GVPNYFGSQR…VEGSRRAVLL (149 aa)). A substrate-binding site is contributed by F328.

It belongs to the pseudouridine synthase TruD family.

The catalysed reaction is uridine(13) in tRNA = pseudouridine(13) in tRNA. Its function is as follows. Responsible for synthesis of pseudouridine from uracil-13 in transfer RNAs. The sequence is that of tRNA pseudouridine synthase D from Yersinia pseudotuberculosis serotype IB (strain PB1/+).